The primary structure comprises 198 residues: Lipoprotein signal peptidase (198 aa).

Residues 1 to 34 form a disordered region; sequence MDDERVSQDPTAENETDAEDRNDDDPSGSAPPQP. Residues 12-26 are compositionally biased toward acidic residues; the sequence is AENETDAEDRNDDDP. A run of 3 helical transmembrane segments spans residues 42–62, 92–112, and 120–140; these read LLFV…ILAV, MATG…IGVV, and SPWW…NLVD. Catalysis depends on residues Asp-155 and Asp-169. A helical membrane pass occupies residues 167 to 187; sequence VADSGIVCGAILLVVLTLIGL.

It belongs to the peptidase A8 family.

It localises to the cell membrane. The catalysed reaction is Release of signal peptides from bacterial membrane prolipoproteins. Hydrolyzes -Xaa-Yaa-Zaa-|-(S,diacylglyceryl)Cys-, in which Xaa is hydrophobic (preferably Leu), and Yaa (Ala or Ser) and Zaa (Gly or Ala) have small, neutral side chains.. The protein operates within protein modification; lipoprotein biosynthesis (signal peptide cleavage). This protein specifically catalyzes the removal of signal peptides from prolipoproteins. This chain is Lipoprotein signal peptidase, found in Rhodococcus jostii (strain RHA1).